The sequence spans 475 residues: Equilibrative nucleoside transporter 3 (475 aa).

The Cytoplasmic segment spans residues methionine 1–asparagine 51. At serine 21 the chain carries Phosphoserine. Residues leucine 31 to leucine 32 carry the Dileucine internalization motif motif. A helical transmembrane segment spans residues glycine 52–valine 72. Over threonine 73–serine 105 the chain is Extracellular. N-linked (GlcNAc...) asparagine glycosylation occurs at asparagine 84. A helical transmembrane segment spans residues tyrosine 106 to valine 126. Over asparagine 127–histidine 132 the chain is Cytoplasmic. The helical transmembrane segment at valine 133–valine 153 threads the bilayer. The Extracellular segment spans residues arginine 154–arginine 162. A helical transmembrane segment spans residues glycine 163–asparagine 183. Residues serine 184 to glutamine 199 lie on the Cytoplasmic side of the membrane. Residues alanine 200–leucine 220 traverse the membrane as a helical segment. Over alanine 221–alanine 230 the chain is Extracellular. The helical transmembrane segment at leucine 231–leucine 251 threads the bilayer. Residues proline 252 to threonine 305 lie on the Cytoplasmic side of the membrane. The tract at residues serine 272 to arginine 291 is disordered. Residues alanine 306–isoleucine 326 form a helical membrane-spanning segment. Residues serine 327–proline 340 are Extracellular-facing. Residues tryptophan 341–cysteine 361 form a helical membrane-spanning segment. The Cytoplasmic portion of the chain corresponds to glycine 362–lysine 377. The helical transmembrane segment at leucine 378 to tyrosine 398 threads the bilayer. Residues glutamine 399–tyrosine 414 lie on the Extracellular side of the membrane. Residues proline 415–glycine 437 form a helical membrane-spanning segment. Residues proline 438–serine 450 are Cytoplasmic-facing. A helical membrane pass occupies residues valine 451 to leucine 471. Residues glutamate 472–isoleucine 475 are Extracellular-facing.

It belongs to the SLC29A/ENT transporter (TC 2.A.57) family. As to expression, widely expressed. Highest levels in heart and liver (at protein level).

The protein localises to the lysosome membrane. It is found in the late endosome membrane. Its subcellular location is the mitochondrion membrane. It localises to the cell membrane. The catalysed reaction is adenosine(in) = adenosine(out). It carries out the reaction guanosine(in) = guanosine(out). The enzyme catalyses inosine(in) = inosine(out). It catalyses the reaction uridine(out) = uridine(in). The catalysed reaction is cytidine(in) = cytidine(out). It carries out the reaction thymidine(in) = thymidine(out). The enzyme catalyses 2'-deoxyadenosine(in) = 2'-deoxyadenosine(out). It catalyses the reaction 2'-deoxycytidine(in) = 2'-deoxycytidine(out). The catalysed reaction is guanine(out) = guanine(in). It carries out the reaction uracil(in) = uracil(out). The enzyme catalyses (R)-noradrenaline(out) = (R)-noradrenaline(in). It catalyses the reaction dopamine(out) = dopamine(in). The catalysed reaction is serotonin(out) = serotonin(in). It carries out the reaction tyramine(in) = tyramine(out). The enzyme catalyses ATP(in) = ATP(out). Functionally, uniporter that mediates the facilitative transport of nucleoside across lysosomal and mitochondrial membranes. Functions as a non-electrogenic Na(+)-independent transporter. Substrate transport is pH-dependent and enhanced under acidic condition, probably reflecting the location of the transporter in acidic intracellular compartments. Proton is not a cotransporting ion but most likely change the ionization state of the transporter which dictates transport-permissible/impermissible conformation for nucleoside translocation. May direct the nucleoside transport from lysosomes to cytosol or cytosol to mitochondria to facilitate the fundamental function of salvage synthesis of nucleic acids. Involved in the transport of nucleosides (adenosine, guanosine, uridine, thymidine, cytidine and inosine) and deoxynucleosides (deoxyadenosine, deoxycytidine). Also mediates transport of purine nucleobases (adenine, guanine) and pyrimidine nucleobases (uracil). Also able to transport monoamine neurotransmitters dopamine, serotonin, noradrenaline and tyramine. Capable of transporting ATP. Mediates nucleoside export from lysosomes in macrophages, which regulates macrophage functions and numbers. The polypeptide is Equilibrative nucleoside transporter 3 (Rattus norvegicus (Rat)).